The sequence spans 293 residues: Signal recognition particle receptor FtsY (293 aa).

Residues 93-100, 175-179, and 239-242 contribute to the GTP site; these read GVNGAGKT, DTAGR, and TKLD.

The protein belongs to the GTP-binding SRP family. FtsY subfamily. As to quaternary structure, part of the signal recognition particle protein translocation system, which is composed of SRP and FtsY. SRP is a ribonucleoprotein composed of Ffh and a 4.5S RNA molecule.

It localises to the cell inner membrane. Its subcellular location is the cytoplasm. It catalyses the reaction GTP + H2O = GDP + phosphate + H(+). Its function is as follows. Involved in targeting and insertion of nascent membrane proteins into the cytoplasmic membrane. Acts as a receptor for the complex formed by the signal recognition particle (SRP) and the ribosome-nascent chain (RNC). Interaction with SRP-RNC leads to the transfer of the RNC complex to the Sec translocase for insertion into the membrane, the hydrolysis of GTP by both Ffh and FtsY, and the dissociation of the SRP-FtsY complex into the individual components. The polypeptide is Signal recognition particle receptor FtsY (Helicobacter pylori (strain ATCC 700392 / 26695) (Campylobacter pylori)).